Here is a 319-residue protein sequence, read N- to C-terminus: Transaldolase (319 aa).

The active-site Schiff-base intermediate with substrate is the K132.

The protein belongs to the transaldolase family. Type 1 subfamily. Homodimer.

Its subcellular location is the cytoplasm. The enzyme catalyses D-sedoheptulose 7-phosphate + D-glyceraldehyde 3-phosphate = D-erythrose 4-phosphate + beta-D-fructose 6-phosphate. It participates in carbohydrate degradation; pentose phosphate pathway; D-glyceraldehyde 3-phosphate and beta-D-fructose 6-phosphate from D-ribose 5-phosphate and D-xylulose 5-phosphate (non-oxidative stage): step 2/3. Functionally, transaldolase is important for the balance of metabolites in the pentose-phosphate pathway. This is Transaldolase from Alteromonas mediterranea (strain DSM 17117 / CIP 110805 / LMG 28347 / Deep ecotype).